Reading from the N-terminus, the 201-residue chain is E3 ubiquitin-protein ligase MIR1 (201 aa).

The segment at 1–58 (MDSTGEFCWICHQPEGPLKRFCGCKGSCAVSHQDCLRGWLETSRRQTCALCGTPYSMK) adopts an RING-CH-type zinc-finger fold. Residues 1 to 81 (MDSTGEFCWI…EEVLAAMEAC (81 aa)) are Cytoplasmic-facing. Residues Cys-8, Cys-11, Cys-22, Cys-24, His-32, Cys-35, Cys-48, and Cys-51 each coordinate Zn(2+). The DIRT stretch occupies residues 52 to 79 (GTPYSMKWKTKPLREWTWGEEEVLAAME). A helical transmembrane segment spans residues 82-102 (LPLVLIPLAVLMIVMGTWLLV). Residues 103 to 113 (NHNGFLSPRMQ) are Extracellular-facing. The chain crosses the membrane as a helical span at residues 114–134 (VVLVVIVLLAMIVFSASASYV). Topologically, residues 135–201 (MVEGPGCLDT…RLGCVRLCCV (67 aa)) are cytoplasmic.

As to quaternary structure, interacts with host UBE2J2.

Its subcellular location is the host endoplasmic reticulum membrane. The catalysed reaction is [E2 ubiquitin-conjugating enzyme]-S-ubiquitinyl-L-cysteine + [acceptor protein]-L-cysteine = [E2 ubiquitin-conjugating enzyme]-L-cysteine + [acceptor protein]-S-ubiquitinyl-L-cysteine.. It functions in the pathway protein modification; protein ubiquitination. Functionally, E3 ubiquitin-protein ligase that mediates ubiquitination of host surface class I (MHC-I) H-2D(b)/H2-D1 and H-2K(b)/H2-K1 molecules before they exit the endoplasmic reticulum, leading to their degradation by the endoplasmic reticulum-associated degradation (ERAD) system, thus blocking the immune detection of virus-infected cells. Mediates ubiquitination of lysine, as well as serine and threonine residues present in the cytoplasmic tail of surface class I molecules. Promotes ubiquitination of hydroxylated serine or threonine residues via ester bonds instead of the classical isopeptide linkage. This chain is E3 ubiquitin-protein ligase MIR1 (K3), found in Murid herpesvirus 4 (MuHV-4).